Reading from the N-terminus, the 635-residue chain is 1-deoxy-D-xylulose-5-phosphate synthase (635 aa).

Residues His-78 and 119–121 contribute to the thiamine diphosphate site; that span reads GHA. Asp-150 lines the Mg(2+) pocket. Thiamine diphosphate contacts are provided by residues 151–152, Asn-179, Phe-291, and Glu-376; that span reads GS. Asn-179 is a Mg(2+) binding site.

The protein belongs to the transketolase family. DXPS subfamily. Homodimer. The cofactor is Mg(2+). It depends on thiamine diphosphate as a cofactor.

It carries out the reaction D-glyceraldehyde 3-phosphate + pyruvate + H(+) = 1-deoxy-D-xylulose 5-phosphate + CO2. It participates in metabolic intermediate biosynthesis; 1-deoxy-D-xylulose 5-phosphate biosynthesis; 1-deoxy-D-xylulose 5-phosphate from D-glyceraldehyde 3-phosphate and pyruvate: step 1/1. Catalyzes the acyloin condensation reaction between C atoms 2 and 3 of pyruvate and glyceraldehyde 3-phosphate to yield 1-deoxy-D-xylulose-5-phosphate (DXP). This chain is 1-deoxy-D-xylulose-5-phosphate synthase, found in Chlorobaculum tepidum (strain ATCC 49652 / DSM 12025 / NBRC 103806 / TLS) (Chlorobium tepidum).